A 457-amino-acid chain; its full sequence is NADH-quinone oxidoreductase subunit N (457 aa).

Helical transmembrane passes span 2 to 22 (NAII…FIGL), 25 to 45 (LIYP…ACTF), 60 to 80 (NYSV…FILF), 92 to 112 (GDHY…VSFS), 114 to 134 (MSML…LAGS), 149 to 169 (FILG…IYGA), 188 to 208 (FFIG…AVPF), 222 to 242 (FITA…FYLM), 253 to 273 (YLSH…NIAA), 283 to 303 (LAFS…ILTI), 310 to 330 (FVYL…VQVV), 353 to 373 (AFVL…AGFF), 382 to 402 (VIHA…LISV), and 431 to 451 (VILA…DILL).

Belongs to the complex I subunit 2 family. NDH-1 is composed of 14 different subunits. Subunits NuoA, H, J, K, L, M, N constitute the membrane sector of the complex.

It is found in the cell inner membrane. The enzyme catalyses a quinone + NADH + 5 H(+)(in) = a quinol + NAD(+) + 4 H(+)(out). In terms of biological role, NDH-1 shuttles electrons from NADH, via FMN and iron-sulfur (Fe-S) centers, to quinones in the respiratory chain. The immediate electron acceptor for the enzyme in this species is believed to be a menaquinone. Couples the redox reaction to proton translocation (for every two electrons transferred, four hydrogen ions are translocated across the cytoplasmic membrane), and thus conserves the redox energy in a proton gradient. The sequence is that of NADH-quinone oxidoreductase subunit N from Cytophaga hutchinsonii (strain ATCC 33406 / DSM 1761 / CIP 103989 / NBRC 15051 / NCIMB 9469 / D465).